Consider the following 377-residue polypeptide: MQCAQYTAGHCHSCQWLNKSYSQQLSDKQQHLQQLLRETSATYWLPPVSSLISGFRNKAKMVVSGSVERPQLGMLHRDGRTVDLCDCPLYPQYFQLVFESIKIFIAKAGLVPYNVARKKGELKYILLTESRASGEMMLRFVLRSETKLAQLEHALPWLQEQLPQLTVISANIQPTHMAILEGEKEVIFTEHKMLKEIFNGIPLYIRPRSFFQTNPEIASALYATAGRWVRELNISSMWDLFCGAGGFGLHCADKETRLTGIEISAEAIACAKNSAKSLGLEQVEFQALDSTHFALDKAQLPELVLVNPPRRGIGKALCEYLSRMAPKFILYSSCNAETMAKDIAALEQYRIEKVQLFDMFPHTEHYETLALLIFDGK.

4 residues coordinate [4Fe-4S] cluster: Cys3, Cys11, Cys14, and Cys87. 4 residues coordinate S-adenosyl-L-methionine: Gln212, Phe241, Glu262, and Asn307. Cys334 acts as the Nucleophile in catalysis.

This sequence belongs to the class I-like SAM-binding methyltransferase superfamily. RNA M5U methyltransferase family. RlmC subfamily.

The enzyme catalyses uridine(747) in 23S rRNA + S-adenosyl-L-methionine = 5-methyluridine(747) in 23S rRNA + S-adenosyl-L-homocysteine + H(+). Functionally, catalyzes the formation of 5-methyl-uridine at position 747 (m5U747) in 23S rRNA. In Xenorhabdus bovienii (strain SS-2004) (Xenorhabdus nematophila subsp. bovienii), this protein is 23S rRNA (uracil(747)-C(5))-methyltransferase RlmC.